The primary structure comprises 120 residues: NAD(P)H-quinone oxidoreductase subunit 3, chloroplastic (120 aa).

3 helical membrane passes run Ile-9 to Gly-29, Met-64 to Met-84, and Val-88 to Leu-108.

It belongs to the complex I subunit 3 family. NDH is composed of at least 16 different subunits, 5 of which are encoded in the nucleus.

It is found in the plastid. The protein localises to the chloroplast thylakoid membrane. The catalysed reaction is a plastoquinone + NADH + (n+1) H(+)(in) = a plastoquinol + NAD(+) + n H(+)(out). It carries out the reaction a plastoquinone + NADPH + (n+1) H(+)(in) = a plastoquinol + NADP(+) + n H(+)(out). Functionally, NDH shuttles electrons from NAD(P)H:plastoquinone, via FMN and iron-sulfur (Fe-S) centers, to quinones in the photosynthetic chain and possibly in a chloroplast respiratory chain. The immediate electron acceptor for the enzyme in this species is believed to be plastoquinone. Couples the redox reaction to proton translocation, and thus conserves the redox energy in a proton gradient. This Populus alba (White poplar) protein is NAD(P)H-quinone oxidoreductase subunit 3, chloroplastic.